The sequence spans 1203 residues: DNA-directed RNA polymerase subunit beta (1203 aa).

Basic and acidic residues predominate over residues 1174-1195 (AAQEAKAAFEAEEAEKATKAEA). Residues 1174-1203 (AAQEAKAAFEAEEAEKATKAEATEEAAEQE) form a disordered region.

The protein belongs to the RNA polymerase beta chain family. The RNAP catalytic core consists of 2 alpha, 1 beta, 1 beta' and 1 omega subunit. When a sigma factor is associated with the core the holoenzyme is formed, which can initiate transcription.

The catalysed reaction is RNA(n) + a ribonucleoside 5'-triphosphate = RNA(n+1) + diphosphate. In terms of biological role, DNA-dependent RNA polymerase catalyzes the transcription of DNA into RNA using the four ribonucleoside triphosphates as substrates. In Streptococcus pneumoniae (strain ATCC 700669 / Spain 23F-1), this protein is DNA-directed RNA polymerase subunit beta.